Here is a 368-residue protein sequence, read N- to C-terminus: Alanine racemase 3 (368 aa).

Residue K42 is the Proton acceptor; specific for D-alanine of the active site. An N6-(pyridoxal phosphate)lysine modification is found at K42. Substrate is bound at residue R141. Y262 serves as the catalytic Proton acceptor; specific for L-alanine. M310 contributes to the substrate binding site.

It belongs to the alanine racemase family. Pyridoxal 5'-phosphate serves as cofactor.

The catalysed reaction is L-alanine = D-alanine. The protein operates within amino-acid biosynthesis; D-alanine biosynthesis; D-alanine from L-alanine: step 1/1. Functionally, catalyzes the interconversion of L-alanine and D-alanine. May also act on other amino acids. This chain is Alanine racemase 3 (alr3), found in Salmonella typhi.